The chain runs to 226 residues: CD9 antigen (226 aa).

Topologically, residues 1–12 (MPVKGGTKCIKY) are cytoplasmic. The S-palmitoyl cysteine moiety is linked to residue cysteine 9. A helical membrane pass occupies residues 13–33 (LLFGFNFIFWLAGIAVLAVGL). The Extracellular segment spans residues 34 to 53 (WLRFDSQTKSIFEQDSQPSS). The helical transmembrane segment at 54–74 (FYTGVYILIGAGALMMLVGFL) threads the bilayer. Residues 75–85 (GCCGAVQESQC) are Cytoplasmic-facing. 3 S-palmitoyl cysteine lipidation sites follow: cysteine 76, cysteine 77, and cysteine 85. Residues 86–109 (MLGLFFGFLLVIFAIEIAAAIWGY) traverse the membrane as a helical segment. At 110–193 (SHKDEVIQEV…KEVFHNKFHI (84 aa)) the chain is on the extracellular side. Intrachain disulfides connect cysteine 150/cysteine 179 and cysteine 151/cysteine 165. A helical membrane pass occupies residues 194 to 219 (IGAVGIGIAVVMIFGMIFSMILCCAI). S-palmitoyl cysteine attachment occurs at residues cysteine 216 and cysteine 217. At 220–226 (RRSREMV) the chain is on the cytoplasmic side.

It belongs to the tetraspanin (TM4SF) family. In terms of assembly, forms both disulfide-linked homodimers and higher homooligomers as well as heterooligomers with other members of the tetraspanin family. Interacts (via the second extracellular domain) with integrin ITGAV:ITGB3. Interacts with integrin ITGA6:ITGB1; interaction takes place in oocytes and is involved in sperm-egg fusion. Part of integrin-tetraspanin complexes composed of CD81, beta-1 and beta-2 integrins in the membrane of monocyte/macrophages. Interacts with CD63; identified in a complex with CD63 and ITGB3. Associates with CR2/CD21 and with PTGFRN/CD9P1. Part of a complex composed of CD9, CD81, PTGFRN and IGSF8. Interacts directly with IGSF8. Interacts with PDPN; this interaction is homophilic and attenuates platelet aggregation and pulmonary metastasis induced by PDPN. Interacts (on T cell side) with CD81 at immunological synapses between antigen-presenting cells and T cells. Post-translationally, palmitoylated at a low, basal level in unstimulated platelets. The level of palmitoylation increases when platelets are activated by thrombin (in vitro). The protein exists in three forms with molecular masses between 22 and 27 kDa, and is known to carry covalently linked fatty acids. Palmitoylation by ZDHHC2 regulates CD9 expression, association with other tetraspanin family proteins and function in cell adhesion.

The protein resides in the cell membrane. It localises to the membrane. Its subcellular location is the secreted. It is found in the extracellular exosome. Its function is as follows. Integral membrane protein associated with integrins, which regulates different processes, such as sperm-egg fusion, platelet activation and aggregation, and cell adhesion. Present at the cell surface of oocytes and plays a key role in sperm-egg fusion, possibly by organizing multiprotein complexes and the morphology of the membrane required for the fusion. In myoblasts, associates with CD81 and PTGFRN and inhibits myotube fusion during muscle regeneration. In macrophages, associates with CD81 and beta-1 and beta-2 integrins, and prevents macrophage fusion into multinucleated giant cells specialized in ingesting complement-opsonized large particles. Also prevents the fusion between mononuclear cell progenitors into osteoclasts in charge of bone resorption. Acts as a receptor for PSG17. Involved in platelet activation and aggregation. Regulates paranodal junction formation. Involved in cell adhesion, cell motility and tumor metastasis. This chain is CD9 antigen, found in Felis catus (Cat).